Consider the following 176-residue polypeptide: MVSPAWCSIALALLLALHEGKGQAAATMEQPASAPKGRGPHLRFRRCSCNSWLDKECVYFCHLDIIWVNTAGQTAPYGLGNPPQRRRRSLPKRCECSSAGDSACATFCHRRPWPEAEVTSSSQGPAAVLETSKTWTAAGDLLQKLRDISAAKLQFVRLRPELTREAIPAHSRRRKR.

Residues 1–22 (MVSPAWCSIALALLLALHEGKG) form the signal peptide. Residues 23–44 (QAAATMEQPASAPKGRGPHLRF) constitute a propeptide that is removed on maturation. 2 disulfides stabilise this stretch: Cys-47/Cys-61 and Cys-49/Cys-57. Positions 68–176 (VNTAGQTAPY…IPAHSRRRKR (109 aa)) are excised as a propeptide. The segment at 94-109 (CECSSAGDSACATFCH) is endothelin-like.

This sequence belongs to the endothelin/sarafotoxin family.

It localises to the secreted. Vasoconstrictor. This is Endothelin-2 (Edn2) from Rattus norvegicus (Rat).